The primary structure comprises 413 residues: Zinc finger protein 821 (413 aa).

Residues 26-83 (RQAMMKTDFPGDLGSQRQAIQQLRDQDSSSSDSEGDEEETTQDEVSSHTSEEDGGVVK) form a disordered region. The span at 58–67 (SEGDEEETTQ) shows a compositional bias: acidic residues. C2H2-type zinc fingers lie at residues 117-141 (QLCQ…VYQH) and 151-173 (YMCP…LLIH). Positions 260–367 (ALRRQNEPLE…EKMDMMLRAQ (108 aa)) form a coiled coil. Residues 279 to 320 (RTAKKSRRDNETPEEREVRRMRDREAKRLQRMQETDEQRARR) form a disordered region.

Belongs to the krueppel C2H2-type zinc-finger protein family.

Its subcellular location is the nucleus. In terms of biological role, may be involved in transcriptional regulation. In Mus musculus (Mouse), this protein is Zinc finger protein 821 (Znf821).